Here is a 506-residue protein sequence, read N- to C-terminus: Maturase K (506 aa).

This sequence belongs to the intron maturase 2 family. MatK subfamily.

The protein resides in the plastid. The protein localises to the chloroplast. Functionally, usually encoded in the trnK tRNA gene intron. Probably assists in splicing its own and other chloroplast group II introns. The chain is Maturase K from Lactuca sativa (Garden lettuce).